The sequence spans 279 residues: Large ribosomal subunit protein uL2 (279 aa).

A disordered region spans residues Ala224 to Arg279. Over residues Val269–Arg279 the composition is skewed to basic residues.

This sequence belongs to the universal ribosomal protein uL2 family. As to quaternary structure, part of the 50S ribosomal subunit. Forms a bridge to the 30S subunit in the 70S ribosome.

Functionally, one of the primary rRNA binding proteins. Required for association of the 30S and 50S subunits to form the 70S ribosome, for tRNA binding and peptide bond formation. It has been suggested to have peptidyltransferase activity; this is somewhat controversial. Makes several contacts with the 16S rRNA in the 70S ribosome. This is Large ribosomal subunit protein uL2 from Cereibacter sphaeroides (strain ATCC 17025 / ATH 2.4.3) (Rhodobacter sphaeroides).